Here is a 395-residue protein sequence, read N- to C-terminus: Putative 8-amino-7-oxononanoate synthase (395 aa).

Residue R23 participates in substrate binding. 110–111 (GY) contacts pyridoxal 5'-phosphate. H135 is a substrate binding site. Residues S182, 207–210 (DEAH), and 239–242 (TFSK) contribute to the pyridoxal 5'-phosphate site. N6-(pyridoxal phosphate)lysine is present on K242. T356 contributes to the substrate binding site.

Belongs to the class-II pyridoxal-phosphate-dependent aminotransferase family. BioF subfamily. Homodimer. Pyridoxal 5'-phosphate is required as a cofactor.

It carries out the reaction 6-carboxyhexanoyl-[ACP] + L-alanine + H(+) = (8S)-8-amino-7-oxononanoate + holo-[ACP] + CO2. The protein operates within cofactor biosynthesis; biotin biosynthesis. Its function is as follows. Catalyzes the decarboxylative condensation of pimeloyl-[acyl-carrier protein] and L-alanine to produce 8-amino-7-oxononanoate (AON), [acyl-carrier protein], and carbon dioxide. In Bacillus cereus (strain ZK / E33L), this protein is Putative 8-amino-7-oxononanoate synthase (bioF).